The following is an 84-amino-acid chain: Probable cyclin-dependent kinases regulatory subunit (84 aa).

This sequence belongs to the CKS family. Monomer in solution; may form a homohexamer that can probably bind six kinase subunits.

Binds to the catalytic subunit of the cyclin dependent kinases and is essential for their biological function. This chain is Probable cyclin-dependent kinases regulatory subunit, found in Physarum polycephalum (Slime mold).